A 330-amino-acid polypeptide reads, in one-letter code: Induced myeloid leukemia cell differentiation protein Mcl-1 homolog (330 aa).

Residues 85 to 155 form a PEST-like region; it reads LAVPPEEMAA…PPEEEDDELY (71 aa). Ser101 is subject to Phosphoserine. A Glycyl lysine isopeptide (Lys-Gly) (interchain with G-Cter in ubiquitin) cross-link involves residue Lys116. The tract at residues 129-153 is disordered; sequence EAAKSSGADGSLPSTPPPPEEEDDE. Ser139 carries the phosphoserine; by GSK3-alpha and GSK3-beta modification. The residue at position 142 (Ser142) is a Phosphoserine. A Phosphothreonine; by MAPK modification is found at Thr143. Glycyl lysine isopeptide (Lys-Gly) (interchain with G-Cter in ubiquitin) cross-links involve residues Lys174 and Lys177. Residues 189–203 carry the BH3 motif; the sequence is ALETLRRVGDGVQRN. The BH1 motif lies at 232–252; the sequence is HVFKDGVTNWGRIVTLISFGA. Positions 284–299 match the BH2 motif; sequence DWLVKQRGWDGFVEFF. Residues 307–329 form a helical membrane-spanning segment; the sequence is GIRNVLLAFAGVAGVGAGLAYLI.

It belongs to the Bcl-2 family. In terms of assembly, interacts with HIF3A (via C-terminus domain). Interacts with BOK, BIK, BAX, BAK1, and TPT1. Interacts with unphosphorylated BAD. Interacts with BMF, BBC3 and PMAIP1. Interacts with BOP. Interacts with BCL2L11; may sequester BCL2L11 to prevent its pro-apoptotic activity. Interacts with GIMAP5 and HSPA8/HSC70; the interaction between HSPA8 and MCL1 is impaired in the absence of GIMAP5. In terms of processing, cleaved by CASP3 during apoptosis, yielding a pro-apoptotic C-terminal fragment. Post-translationally, rapidly degraded in the absence of phosphorylation in the PEST region. Phosphorylated on Ser-139, by GSK3, in response to IL3/interleukin-3 withdrawal. Phosphorylation at Ser-139 induces ubiquitination and proteasomal degradation, abrogating the anti-apoptotic activity. Treatment with taxol or okadaic acid induces phosphorylation on additional sites. In terms of processing, ubiquitinated. Ubiquitination is induced by phosphorylation at Ser-139. Deubiquitinated by USP20; leading to increased stability. As to expression, ubiquitous. Highly expressed in heart, spleen, lung, liver, skeletal muscle and kidney. Detected at lower levels in brain, ovary, oviduct and testis.

It is found in the membrane. Its subcellular location is the cytoplasm. It localises to the mitochondrion. The protein resides in the nucleus. The protein localises to the nucleoplasm. Functionally, involved in the regulation of apoptosis versus cell survival, and in the maintenance of viability but not of proliferation. Mediates its effects by interactions with a number of other regulators of apoptosis. The polypeptide is Induced myeloid leukemia cell differentiation protein Mcl-1 homolog (Mcl1) (Rattus norvegicus (Rat)).